The sequence spans 602 residues: ATP-dependent lipid A-core flippase (602 aa).

5 consecutive transmembrane segments (helical) span residues 28–48, 84–104, 158–178, 180–200, and 268–288; these read VGIF…QPML, LLII…NYFL, IKVV…LLWM, WHLT…VSIA, and PMLQ…VLFL. An ABC transmembrane type-1 domain is found at 32–323; that stretch reads LLSIVGFVIF…LSEVSSTIQK (292 aa). An ABC transporter domain is found at 355–591; the sequence is LEVRNLSFTY…NGHYARLHAM (237 aa). 389 to 396 contributes to the ATP binding site; that stretch reads GRSGSGKS.

The protein belongs to the ABC transporter superfamily. Lipid exporter (TC 3.A.1.106) family. Homodimer.

Its subcellular location is the cell inner membrane. The enzyme catalyses ATP + H2O + lipid A-core oligosaccharideSide 1 = ADP + phosphate + lipid A-core oligosaccharideSide 2.. Its function is as follows. Involved in lipopolysaccharide (LPS) biosynthesis. Translocates lipid A-core from the inner to the outer leaflet of the inner membrane. Transmembrane domains (TMD) form a pore in the inner membrane and the ATP-binding domain (NBD) is responsible for energy generation. This Pseudomonas putida (strain ATCC 47054 / DSM 6125 / CFBP 8728 / NCIMB 11950 / KT2440) protein is ATP-dependent lipid A-core flippase.